The chain runs to 257 residues: Deoxyribose-phosphate aldolase (257 aa).

D102 (proton donor/acceptor) is an active-site residue. K166 (schiff-base intermediate with acetaldehyde) is an active-site residue. K198 serves as the catalytic Proton donor/acceptor.

The protein belongs to the DeoC/FbaB aldolase family. DeoC type 2 subfamily.

It localises to the cytoplasm. It carries out the reaction 2-deoxy-D-ribose 5-phosphate = D-glyceraldehyde 3-phosphate + acetaldehyde. It functions in the pathway carbohydrate degradation; 2-deoxy-D-ribose 1-phosphate degradation; D-glyceraldehyde 3-phosphate and acetaldehyde from 2-deoxy-alpha-D-ribose 1-phosphate: step 2/2. Catalyzes a reversible aldol reaction between acetaldehyde and D-glyceraldehyde 3-phosphate to generate 2-deoxy-D-ribose 5-phosphate. The protein is Deoxyribose-phosphate aldolase of Shewanella piezotolerans (strain WP3 / JCM 13877).